Reading from the N-terminus, the 107-residue chain is Protein Asterix (107 aa).

Positions 1 to 15 (MSHSHGNASSVNDPR) are enriched in polar residues. The interval 1-25 (MSHSHGNASSVNDPRQPSAAKPYIP) is disordered. Residues 82–98 (ISMAMMFAIMGLVTNYL) traverse the membrane as a helical segment.

Belongs to the Asterix family.

Its subcellular location is the membrane. The sequence is that of Protein Asterix from Arabidopsis thaliana (Mouse-ear cress).